A 324-amino-acid polypeptide reads, in one-letter code: Viral cathepsin (324 aa).

The first 16 residues, 1–16, serve as a signal peptide directing secretion; that stretch reads MNKIVLYLLVYGAVQC. A propeptide spans 17–113 (activation peptide); it reads AAYDVLKAPN…VVLDRPPDKG (97 aa). Disulfide bonds link Cys-134-Cys-175, Cys-168-Cys-208, and Cys-263-Cys-311. Residue Cys-137 is part of the active site. N-linked (GlcNAc...) asparagine; by host glycosylation is present at Asn-159. Active-site residues include His-270 and Asn-290.

It belongs to the peptidase C1 family. Post-translationally, synthesized as an inactive proenzyme and activated by proteolytic removal of the inhibitory propeptide.

The enzyme catalyses Endopeptidase of broad specificity, hydrolyzing substrates of both cathepsin L and cathepsin B.. Its function is as follows. Cysteine protease that plays an essential role in host liquefaction to facilitate horizontal transmission of the virus. May participate in the degradation of foreign protein expressed by the baculovirus system. The chain is Viral cathepsin (Vcath) from Choristoneura fumiferana nuclear polyhedrosis virus (CfMNPV).